Reading from the N-terminus, the 627-residue chain is BEL1-like homeodomain protein 4 (627 aa).

The tract at residues 206 to 225 (SSQHHHHQVVGHFGSSSSSP) is disordered. A compositionally biased stretch (low complexity) spans 215–225 (VGHFGSSSSSP). An SR/KY domain region spans residues 241–257 (SKYTKPAQELLEEFCSV). The disordered stretch occupies residues 263 to 307 (KKNKLSRNNSNPNTTGGGGGGGSSSSAGTANDSPPLSPADRIEHQ). A BELL domain region spans residues 302–373 (DRIEHQRRKV…CLKDAVAVQL (72 aa)). The segment at residues 424-486 (AWRPQRGLPE…NARVRLWKPM (63 aa)) is a DNA-binding region (homeobox). The interval 494-530 (EAKEREEAEEENENQQQQRRQQQTNNNDTKPNNNENN) is disordered. The span at 507–530 (NQQQQRRQQQTNNNDTKPNNNENN) shows a compositional bias: low complexity.

It belongs to the TALE/BELL homeobox family. In terms of assembly, may form heterodimeric complexes with TALE/KNOX proteins. Interacts with OFP1, OFP2 and OFP5. Interacts with KNATM, isoform KNATM-B. In terms of tissue distribution, expressed in lateral organs.

The protein resides in the nucleus. Transcription factor that establishes leaf shape by repressing growth in specific subdomains of the leaf. Negatively regulates knox homeobox gene KNAT1/BP expression. In Arabidopsis thaliana (Mouse-ear cress), this protein is BEL1-like homeodomain protein 4 (BLH4).